The sequence spans 276 residues: NAD kinase (276 aa).

The active-site Proton acceptor is Asp61. Residues 61-62, Arg66, 135-136, Arg146, His163, Asp165, and Ala200 each bind NAD(+); these read DG and NE.

Belongs to the NAD kinase family. A divalent metal cation serves as cofactor.

The protein resides in the cytoplasm. It carries out the reaction NAD(+) + ATP = ADP + NADP(+) + H(+). Involved in the regulation of the intracellular balance of NAD and NADP, and is a key enzyme in the biosynthesis of NADP. Catalyzes specifically the phosphorylation on 2'-hydroxyl of the adenosine moiety of NAD to yield NADP. This is NAD kinase from Chloroflexus aurantiacus (strain ATCC 29366 / DSM 635 / J-10-fl).